Reading from the N-terminus, the 435-residue chain is NADH-quinone oxidoreductase subunit D (435 aa).

It belongs to the complex I 49 kDa subunit family. As to quaternary structure, NDH-1 is composed of 14 different subunits. Subunits NuoB, C, D, E, F, and G constitute the peripheral sector of the complex.

It is found in the cell inner membrane. The enzyme catalyses a quinone + NADH + 5 H(+)(in) = a quinol + NAD(+) + 4 H(+)(out). Functionally, NDH-1 shuttles electrons from NADH, via FMN and iron-sulfur (Fe-S) centers, to quinones in the respiratory chain. The immediate electron acceptor for the enzyme in this species is believed to be ubiquinone. Couples the redox reaction to proton translocation (for every two electrons transferred, four hydrogen ions are translocated across the cytoplasmic membrane), and thus conserves the redox energy in a proton gradient. The polypeptide is NADH-quinone oxidoreductase subunit D (Xanthomonas euvesicatoria pv. vesicatoria (strain 85-10) (Xanthomonas campestris pv. vesicatoria)).